The following is a 93-amino-acid chain: Small ribosomal subunit protein uS15c (93 aa).

It belongs to the universal ribosomal protein uS15 family. As to quaternary structure, part of the 30S ribosomal subunit.

Its subcellular location is the plastid. The protein localises to the chloroplast. The polypeptide is Small ribosomal subunit protein uS15c (rps15) (Jasminum nudiflorum (Winter jasmine)).